We begin with the raw amino-acid sequence, 178 residues long: Protein PilI (178 aa).

The 140-residue stretch at 34 to 173 (SWSGIGFRMG…PHALAQHQGF (140 aa)) folds into the CheW-like domain.

In terms of biological role, may be a part of a signal-transduction system that regulates twitching motility by controlling pilus function (extension and retraction). In Pseudomonas aeruginosa (strain ATCC 15692 / DSM 22644 / CIP 104116 / JCM 14847 / LMG 12228 / 1C / PRS 101 / PAO1), this protein is Protein PilI (pilI).